A 188-amino-acid chain; its full sequence is dCTP deaminase, dUMP-forming (188 aa).

DCTP is bound by residues 101 to 106 (KSSLGR), D119, 127 to 129 (TLE), Q148, Y162, and Q174. Residue E129 is the Proton donor/acceptor of the active site.

It belongs to the dCTP deaminase family. Homotrimer.

It catalyses the reaction dCTP + 2 H2O = dUMP + NH4(+) + diphosphate. The protein operates within pyrimidine metabolism; dUMP biosynthesis; dUMP from dCTP: step 1/1. Bifunctional enzyme that catalyzes both the deamination of dCTP to dUTP and the hydrolysis of dUTP to dUMP without releasing the toxic dUTP intermediate. This chain is dCTP deaminase, dUMP-forming, found in Corynebacterium jeikeium (strain K411).